Reading from the N-terminus, the 179-residue chain is Large ribosomal subunit protein uL6 (179 aa).

The protein belongs to the universal ribosomal protein uL6 family. In terms of assembly, part of the 50S ribosomal subunit.

In terms of biological role, this protein binds to the 23S rRNA, and is important in its secondary structure. It is located near the subunit interface in the base of the L7/L12 stalk, and near the tRNA binding site of the peptidyltransferase center. This Geotalea daltonii (strain DSM 22248 / JCM 15807 / FRC-32) (Geobacter daltonii) protein is Large ribosomal subunit protein uL6.